The following is a 100-amino-acid chain: Osteocalcin (100 aa).

Positions 1–23 (MRALTLLALLALAALCITGQAGA) are cleaved as a signal peptide. Residues 24–51 (KPSGADSSKGAAFVSKQEGSEVVKRPRR) constitute a propeptide that is removed on maturation. The Gla domain occupies 52 to 98 (YLYQWLGAPVPYPDPLEPKREVCELNPDCDELADHIGFQEAYRRFYG). Ca(2+)-binding residues include glutamate 68, glutamate 72, glutamate 75, and aspartate 81. A 4-carboxyglutamate mark is found at glutamate 68, glutamate 72, and glutamate 75. A disulfide bridge connects residues cysteine 74 and cysteine 80.

Belongs to the osteocalcin/matrix Gla protein family. In terms of processing, gamma-carboxyglutamate residues are formed by vitamin K dependent carboxylation by GGCX. These residues are essential for the binding of calcium. Decarboxylation promotes the hormone activity.

It is found in the secreted. In terms of biological role, the carboxylated form is one of the main organic components of the bone matrix, which constitutes 1-2% of the total bone protein: it acts as a negative regulator of bone formation and is required to limit bone formation without impairing bone resorption or mineralization. The carboxylated form binds strongly to apatite and calcium. The uncarboxylated form acts as a hormone secreted by osteoblasts, which regulates different cellular processes, such as energy metabolism, male fertility and brain development. Regulates of energy metabolism by acting as a hormone favoring pancreatic beta-cell proliferation, insulin secretion and sensitivity and energy expenditure. Uncarboxylated osteocalcin hormone also promotes testosterone production in the testes: acts as a ligand for G protein-coupled receptor GPRC6A at the surface of Leydig cells, initiating a signaling response that promotes the expression of enzymes required for testosterone synthesis in a CREB-dependent manner. Also acts as a regulator of brain development: osteocalcin hormone crosses the blood-brain barrier and acts as a ligand for GPR158 on neurons, initiating a signaling response that prevents neuronal apoptosis in the hippocampus, favors the synthesis of all monoamine neurotransmitters and inhibits that of gamma-aminobutyric acid (GABA). Osteocalcin also crosses the placenta during pregnancy and maternal osteocalcin is required for fetal brain development. The protein is Osteocalcin of Pongo pygmaeus (Bornean orangutan).